A 328-amino-acid polypeptide reads, in one-letter code: uncharacterized protein (328 aa).

It belongs to the Gfo/Idh/MocA family.

This is an uncharacterized protein from Escherichia coli (strain K12).